The sequence spans 357 residues: DNA integrity scanning protein DisA (357 aa).

A DAC domain is found at 8 to 146; that stretch reads VKSMINILQL…GNLRYTLKDI (139 aa). Residues glycine 75, leucine 93, and 106–110 each bind ATP; that span reads MRHRT.

The protein belongs to the DisA family. As to quaternary structure, homooctamer. Mg(2+) is required as a cofactor.

It catalyses the reaction 2 ATP = 3',3'-c-di-AMP + 2 diphosphate. Its function is as follows. Participates in a DNA-damage check-point that is active prior to asymmetric division when DNA is damaged. DisA forms globular foci that rapidly scan along the chromosomes during sporulation, searching for lesions. When a lesion is present, DisA pauses at the lesion site. This triggers a cellular response that culminates in a temporary block in sporulation initiation. Also has diadenylate cyclase activity, catalyzing the condensation of 2 ATP molecules into cyclic di-AMP (c-di-AMP). c-di-AMP acts as a signaling molecule that couples DNA integrity with progression of sporulation. The rise in c-di-AMP level generated by DisA while scanning the chromosome, operates as a positive signal that advances sporulation; upon encountering a lesion, the DisA focus arrests at the damaged site and halts c-di-AMP synthesis. The protein is DNA integrity scanning protein DisA of Bacillus anthracis (strain CDC 684 / NRRL 3495).